Here is a 473-residue protein sequence, read N- to C-terminus: Sensor histidine kinase GtrS (473 aa).

Topologically, residues 1-8 are cytoplasmic; that stretch reads MPRSLLGR. Residues 9-29 form a helical membrane-spanning segment; that stretch reads MLLLTLLAVLVAQGLSSLFWL. Topologically, residues 30 to 197 are periplasmic; that stretch reads SHLRSSQREG…LEPEGLQPQQ (168 aa). A helical transmembrane segment spans residues 198–218; it reads VLSIVFTSLLLLLFTGLLMHW. The 53-residue stretch at 217–269 folds into the HAMP domain; that stretch reads HWQSRPLKRLARAARDLALGSPSAALEERGASELVEVARAFNTMHERIDRYLN. At 219–473 the chain is on the cytoplasmic side; sequence QSRPLKRLAR…SLRLPRLGLE (255 aa). Residues 277 to 471 enclose the Histidine kinase domain; the sequence is AISHDLRTPI…RVSLRLPRLG (195 aa). Histidine 280 carries the post-translational modification Phosphohistidine; by autocatalysis.

Post-translationally, autophosphorylated.

The protein resides in the cell inner membrane. The catalysed reaction is ATP + protein L-histidine = ADP + protein N-phospho-L-histidine.. Functionally, member of the two-component regulatory system GtrS/GltR involved in the regulation of glucose metabolism and transport, as well as regulation of the exotoxin A gene expression. GtrS recognizes and binds 2-ketogluconate and 6-phosphogluconate via its sensor domain, which accelerates GtrS autophosphorylation and concomitant transphosphorylation and regulation of the response regulator GltR. Plays a key role during bacteria-host interactions and is required for optimal colonization and dissemination in a mouse model of infection. Contributes to modulation of the type III secretion system (T3SS) in response to host cells via the regulation of the OprB transport system. This Pseudomonas aeruginosa (strain ATCC 15692 / DSM 22644 / CIP 104116 / JCM 14847 / LMG 12228 / 1C / PRS 101 / PAO1) protein is Sensor histidine kinase GtrS.